Here is a 320-residue protein sequence, read N- to C-terminus: 4-hydroxyproline 2-epimerase (320 aa).

The Proton acceptor role is filled by cysteine 98. Substrate is bound by residues glycine 99–histidine 100, histidine 218, and aspartate 242. Residue cysteine 246 is the Proton donor of the active site. Glycine 247–threonine 248 serves as a coordination point for substrate.

It belongs to the proline racemase family.

The catalysed reaction is trans-4-hydroxy-L-proline = cis-4-hydroxy-D-proline. Its function is as follows. Catalyzes the epimerization of trans-4-hydroxy-L-proline (t4LHyp) to cis-4-hydroxy-D-proline (c4DHyp). Is likely involved in a degradation pathway that converts t4LHyp to alpha-ketoglutarate. Displays no proline racemase activity. This is 4-hydroxyproline 2-epimerase from Burkholderia pseudomallei (strain 1710b).